The primary structure comprises 34 residues: U4-theraphotoxin-Hs1a (34 aa).

Intrachain disulfides connect cysteine 3–cysteine 17, cysteine 10–cysteine 22, and cysteine 16–cysteine 33.

The protein belongs to the neurotoxin 14 (magi-1) family. 05 (ICK-7) subfamily. Expressed by the venom gland.

It localises to the secreted. Its function is as follows. Intracisternal injection paralyzes mice. This chain is U4-theraphotoxin-Hs1a, found in Cyriopagopus schmidti (Chinese bird spider).